The sequence spans 436 residues: Gamma-glutamyl phosphate reductase (436 aa).

The protein belongs to the gamma-glutamyl phosphate reductase family.

Its subcellular location is the cytoplasm. It catalyses the reaction L-glutamate 5-semialdehyde + phosphate + NADP(+) = L-glutamyl 5-phosphate + NADPH + H(+). Its pathway is amino-acid biosynthesis; L-proline biosynthesis; L-glutamate 5-semialdehyde from L-glutamate: step 2/2. In terms of biological role, catalyzes the NADPH-dependent reduction of L-glutamate 5-phosphate into L-glutamate 5-semialdehyde and phosphate. The product spontaneously undergoes cyclization to form 1-pyrroline-5-carboxylate. The chain is Gamma-glutamyl phosphate reductase from Polaromonas sp. (strain JS666 / ATCC BAA-500).